A 102-amino-acid chain; its full sequence is Glycoprotein 24A (102 aa).

The protein belongs to the csb family. O-glycosylated.

The protein resides in the cell surface. Functionally, cell-cell adhesion during early development. This Dictyostelium discoideum (Social amoeba) protein is Glycoprotein 24A (csbA).